A 239-amino-acid polypeptide reads, in one-letter code: Leucyl/phenylalanyl-tRNA--protein transferase (239 aa).

Belongs to the L/F-transferase family.

Its subcellular location is the cytoplasm. It catalyses the reaction N-terminal L-lysyl-[protein] + L-leucyl-tRNA(Leu) = N-terminal L-leucyl-L-lysyl-[protein] + tRNA(Leu) + H(+). The catalysed reaction is N-terminal L-arginyl-[protein] + L-leucyl-tRNA(Leu) = N-terminal L-leucyl-L-arginyl-[protein] + tRNA(Leu) + H(+). It carries out the reaction L-phenylalanyl-tRNA(Phe) + an N-terminal L-alpha-aminoacyl-[protein] = an N-terminal L-phenylalanyl-L-alpha-aminoacyl-[protein] + tRNA(Phe). Its function is as follows. Functions in the N-end rule pathway of protein degradation where it conjugates Leu, Phe and, less efficiently, Met from aminoacyl-tRNAs to the N-termini of proteins containing an N-terminal arginine or lysine. The chain is Leucyl/phenylalanyl-tRNA--protein transferase from Aliivibrio fischeri (strain MJ11) (Vibrio fischeri).